Reading from the N-terminus, the 101-residue chain is Venom peptide Pc (101 aa).

The signal sequence occupies residues 1 to 20 (MSHLRIAVIFLCTLFALTAG).

This sequence belongs to the scorpion La1-like peptide family. Contains 4 disulfide bonds. Expressed by the venom gland.

Its subcellular location is the secreted. The polypeptide is Venom peptide Pc (Pandinus cavimanus (Tanzanian red clawed scorpion)).